We begin with the raw amino-acid sequence, 959 residues long: Translation initiation factor IF-2 (959 aa).

Positions 1 to 10 are enriched in basic and acidic residues; sequence MSDKTNDDKT. A disordered region spans residues 1 to 374; sequence MSDKTNDDKT…SQMQETREKI (374 aa). A compositionally biased stretch (polar residues) spans 27 to 37; the sequence is EQSTVRQNFSH. Low complexity-rich tracts occupy residues 63 to 118 and 128 to 138; these read AAAA…VTKP and QRPGGQQAQRP. Composition is skewed to basic and acidic residues over residues 154 to 225 and 232 to 241; these read SEMD…EAAK and ARSERRDDAR. Residues 246–284 are compositionally biased toward low complexity; the sequence is GARPQQAGRPQGGRPQPAGRPQQGSPRPAPIIADAAPIA. Basic and acidic residues predominate over residues 318–333; sequence PEVRAPKVVKGEDDRR. Positions 457 to 626 constitute a tr-type G domain; it reads SRPPVVTIMG…LLQAEMLDLK (170 aa). The G1 stretch occupies residues 466–473; that stretch reads GHVDHGKT. 466–473 lines the GTP pocket; it reads GHVDHGKT. A G2 region spans residues 491 to 495; that stretch reads GITQH. Residues 512–515 are G3; sequence DTPG. Residues 512–516 and 566–569 contribute to the GTP site; these read DTPGH and NKID. The tract at residues 566 to 569 is G4; it reads NKID. Residues 602-604 form a G5 region; that stretch reads SAK.

Belongs to the TRAFAC class translation factor GTPase superfamily. Classic translation factor GTPase family. IF-2 subfamily.

The protein resides in the cytoplasm. One of the essential components for the initiation of protein synthesis. Protects formylmethionyl-tRNA from spontaneous hydrolysis and promotes its binding to the 30S ribosomal subunits. Also involved in the hydrolysis of GTP during the formation of the 70S ribosomal complex. The sequence is that of Translation initiation factor IF-2 from Brucella melitensis biotype 1 (strain ATCC 23456 / CCUG 17765 / NCTC 10094 / 16M).